We begin with the raw amino-acid sequence, 339 residues long: tRNA N6-adenosine threonylcarbamoyltransferase (339 aa).

Fe cation-binding residues include histidine 111 and histidine 115. Substrate-binding positions include 134–138, aspartate 167, glycine 180, and asparagine 272; that span reads LVSGG. Aspartate 300 lines the Fe cation pocket.

The protein belongs to the KAE1 / TsaD family. The cofactor is Fe(2+).

It localises to the cytoplasm. The catalysed reaction is L-threonylcarbamoyladenylate + adenosine(37) in tRNA = N(6)-L-threonylcarbamoyladenosine(37) in tRNA + AMP + H(+). In terms of biological role, required for the formation of a threonylcarbamoyl group on adenosine at position 37 (t(6)A37) in tRNAs that read codons beginning with adenine. Is involved in the transfer of the threonylcarbamoyl moiety of threonylcarbamoyl-AMP (TC-AMP) to the N6 group of A37, together with TsaE and TsaB. TsaD likely plays a direct catalytic role in this reaction. The polypeptide is tRNA N6-adenosine threonylcarbamoyltransferase (Vibrio vulnificus (strain YJ016)).